The following is a 687-amino-acid chain: MCASLNEVKKNDTYGVSQKGYNDNFSESEGVLHGSKSMPTSMKNMLQSPTMVNMCDILQNKEAANDEKPVIPTTDTATAGTGTEDISSTQSEETDQNSHLIASEILEGTFKDVSYKEYANFLGNDNNNQVLTEFVKLLSPLPSSLLETLFNLSKSIYFIAEAQNIDRILECLSKEWIACHPNTHWKSGYKSCHIVLFSLLILNSDLHNNFQVDHKKIKFSMVAFINNTLRALREENEYEELKIYSREHLIIEELSEYYKTLNETPLPLCTESRTSINTSDNQSSLKRFSTLGSREFSTSNLRSVNSNSTTLYSRDGQVSVREMSAKSNKNFHNNHPMDALYLKESFDDGLITENGSSWFMDDLILISKKSLPRKYSKRDKDQVAAPKTTSKRNKSFFGWLKPSKTTTLIEHASRRTSLSYLNKDSEWERVKIQVKEGRIFIFKIKPDVKDIIQSSETDSATIDYFKDISSSYFAYSLLEAEAHVVQDNIIIGSGAMKSNVCNKNTKRKSGNFTVSFPENINGPKLVLEFQTRSVEEAHKFMDCINFWAGRISPVPLTQFEAVSNAEYGWSDKILTEHASLNLKNIVVSEWKPLLGLELLYEDAKDVEMVELKERLKELMNFTRQLGIWIDKHNEIKDKLVEIWSFDDNYFEAVMNNWNSRYLYMNNQYKKRLSYLKALQKAMGSVQF.

The segment covering 14–27 (YGVSQKGYNDNFSE) has biased composition (polar residues). Disordered stretches follow at residues 14 to 35 (YGVSQKGYNDNFSESEGVLHGS) and 63 to 97 (AANDEKPVIPTTDTATAGTGTEDISSTQSEETDQN). The SEC7 domain occupies 57–264 (ILQNKEAAND…SEYYKTLNET (208 aa)). Low complexity predominate over residues 73 to 83 (TTDTATAGTGT). Residue Thr-290 is modified to Phosphothreonine. A phosphoserine mark is found at Ser-293 and Ser-299. A PH domain is found at 412–551 (ASRRTSLSYL…DCINFWAGRI (140 aa)).

It belongs to the YEL1 family.

Its subcellular location is the cytoplasm. The protein resides in the cell membrane. It localises to the bud neck. It is found in the bud tip. Its function is as follows. Guanine nucleotide exchange factor for ARF3 required for localization of ARF3 to the bud neck and tip and involved in actin patch polarization. In Saccharomyces cerevisiae (strain RM11-1a) (Baker's yeast), this protein is Guanine-nucleotide exchange factor YEL1 (YEL1).